A 964-amino-acid chain; its full sequence is MTLLEPEMLMMAVQSVLQLKLQQRRTREELVSQGIMPPLKSPAAFHEQRRSLERARTEDYLKRKIRSRPERAELVRMHILEETSAEPSLQAKQLKLKRARLADDLNEKIAQRPGPMELVEKNILPVESSLKEAIIVGQVNYPKVADSSSFDEDSSDALSPEQPASHESQGSVPSPLESRVSDPLPSATSISPTQVLSQLPMAPDPGETLFLAEQPPLPPAPLLPPSLANGSIVPTAKPAPTLIKQSQPKSASEKSQRSKKAKELKPKVKKLKYHQYIPPDQKQDKGAPAMDSSYAKILQQQQLFLQLQILNQQQQQQQQQHYNYQAILPAPPKPSAETPGSSAPTPSRSLSTSSSPSSGTPGPSGLARQSSTALAAKPGALPANLDDMKVAELKQELKLRSLPVSGTKTELIERLRAYQDQVSPAPGAPKAPATTSVLSKAGEVVVAFPAALLSTGSALVTAGLAPAEMVVATVTSNGMVKFGSTGSTPPVSPTPSERSLLSTGDENSTPGDAFGEMVTSPLTQLTLQASPLQIVKEEGARAASCCLSPGARAELEGLDKDQMLQEKDKQIEELTRMLQQKQQLVELLRLQLEQQKRAQQPAPASSPVKRESGFSSCQLSCQPQGSAHAFGSGLVVPTTNHGDTQAPAPESPPVVVKQEAGPPEPDLAPSSQLLLGSQGTSFLKRVSPPTLVTDSTGTHLILTVTNKSADGPGLPAGSPQQPLSQPGSPAPGPPAQMDLEHPPQPPFATPTSLLKKEPPGYEETVTQQPKQQENGSSSQHMDDLFDILIQSGEISADFKEPPSLPGKEKSPPAAAAYGPPLTPQPSPLSELPQAAPPPGSPTLPGRLEDFLESSTGLPLLTSGHEGPEPLSLIDDLHSQMLSSSAILDHPPSPMDTSELHFAPEPSSGMGLDLAVGHLDSMDWLELSSGGPVLSLAPLSTAAPSLFSMDFLDGHDLQLHWDSCL.

A mediates interaction with SCAI and ACTB region spans residues 1–291 (MTLLEPEMLM…KQDKGAPAMD (291 aa)). An RPEL 1 repeat occupies 15-40 (SVLQLKLQQRRTREELVSQGIMPPLK). S41 bears the Phosphoserine mark. An intervening spacer sequence 1 region spans residues 41–58 (SPAAFHEQRRSLERARTE). One copy of the RPEL 2 repeat lies at 59-84 (DYLKRKIRSRPERAELVRMHILEETS). The Bipartite Nuclear localization signal motif lies at 62–100 (KRKIRSRPERAELVRMHILEETSAEPSLQAKQLKLKRAR). Residues 85–102 (AEPSLQAKQLKLKRARLA) are intervening spacer sequence 2. One copy of the RPEL 3 repeat lies at 103-128 (DDLNEKIAQRPGPMELVEKNILPVES). 2 disordered regions span residues 145–292 (ADSS…AMDS) and 328–371 (LPAP…RQSS). Residues S159, S174, and S191 each carry the phosphoserine modification. Residues 186–197 (SATSISPTQVLS) show a composition bias toward polar residues. The segment covering 215-224 (PPLPPAPLLP) has biased composition (pro residues). Basic and acidic residues predominate over residues 251-266 (ASEKSQRSKKAKELKP). The span at 340–365 (GSSAPTPSRSLSTSSSPSSGTPGPSG) shows a compositional bias: low complexity. S349 and S351 each carry phosphoserine. T352 carries the post-translational modification Phosphothreonine. A phosphoserine mark is found at S355 and S358. The residue at position 360 (T360) is a Phosphothreonine. Phosphoserine is present on S371. In terms of domain architecture, SAP spans 385 to 419 (LDDMKVAELKQELKLRSLPVSGTKTELIERLRAYQ). 2 positions are modified to phosphoserine: S423 and S484. Residues 484–508 (STGSTPPVSPTPSERSLLSTGDENS) are disordered. T485 carries the phosphothreonine modification. At S487 the chain carries Phosphoserine. Position 488 is a phosphothreonine (T488). S492 bears the Phosphoserine mark. At T494 the chain carries Phosphothreonine. S496 is modified (phosphoserine). The span at 497–508 (ERSLLSTGDENS) shows a compositional bias: polar residues. 4 positions are modified to phosphoserine: S520, S530, S544, and S548. Residues 552–600 (RAELEGLDKDQMLQEKDKQIEELTRMLQQKQQLVELLRLQLEQQKRAQQ) are a coiled coil. Residues S605, S606, S651, S687, S718, S724, and S728 each carry the phosphoserine modification. A disordered region spans residues 638–673 (TTNHGDTQAPAPESPPVVVKQEAGPPEPDLAPSSQL). 2 disordered regions span residues 706–779 (NKSA…SSSQ) and 796–849 (ADFK…RLED). The span at 715 to 727 (PAGSPQQPLSQPG) shows a compositional bias: low complexity. The segment covering 764-779 (TVTQQPKQQENGSSSQ) has biased composition (polar residues). A compositionally biased stretch (basic and acidic residues) spans 796–810 (ADFKEPPSLPGKEKS). At S810 the chain carries Phosphoserine. T822 bears the Phosphothreonine mark. Phosphoserine is present on residues S826 and S840. T842 carries the phosphothreonine modification. A Phosphoserine modification is found at S892.

Interacts with SRF, forming the SRF-MRTFA nuclear complex which binds the 5'-CArG-3' consensus motif (CArG box) on DNA via SRF. Interacts (via RPEL repeats) with globular actin (G-actin), thereby regulating its subcellular location and activity of the complex formed with SRF. Either forms a trivalent (by binding three G-actin monomers) or pentavalent (by binding five G-actin monomers) complex with G-actin. Forms a nuclear ternary complex with SCAI and SRF, leading to suppress MRTFA-induced SRF transcriptional activity. Interacts with beta-actin (ACTB); interaction with ACTB prevents interaction with SCAI. Interacts with MRTFB. Phosphorylation at Ser-41 by Erk inhibits binding of globular actin (G-actin), unmasking the nuclear localization signal (NLS) and promoting nuclear import. In terms of tissue distribution, expressed in heart, brain, spleen, lung, liver, muscle, kidney and testis.

The protein resides in the cytoplasm. It is found in the nucleus. Transcription coactivator that associates with the serum response factor (SRF) transcription factor to control expression of genes regulating the cytoskeleton during development, morphogenesis and cell migration. The SRF-MRTFA complex activity responds to Rho GTPase-induced changes in cellular globular actin (G-actin) concentration, thereby coupling cytoskeletal gene expression to cytoskeletal dynamics. MRTFA binds G-actin via its RPEL repeats, regulating activity of the MRTFA-SRF complex. Activity is also regulated by filamentous actin (F-actin) in the nucleus. In Mus musculus (Mouse), this protein is Myocardin-related transcription factor A (Mrtfa).